A 248-amino-acid chain; its full sequence is MDIVRSPISTLNHIYDISGVEVGQHFYWQIGGFQVHGQVLITSWIVIAVLLGSATIAVRDPQTIPTGGQNFVEYILEFFRDLTRTQIGEEEYGPWVPFIGTMFLFIFVSNWSGALLPWGILKLPQGELAAPTNDINTTVALALLTSVAYFYAGLAKKGLGYFGKYIQPTPILLPINILEDFTKPLSLSFRLFGNILADELVVAVLVSPVPLVVPIPVMFLGLFTSGIQALIFATLAAAYIGESMEGHH.

Helical transmembrane passes span 38 to 58 (QVLITSWIVIAVLLGSATIAV), 96 to 116 (VPFIGTMFLFIFVSNWSGALL), 135 to 155 (INTTVALALLTSVAYFYAGLA), 200 to 220 (LVVAVLVSPVPLVVPIPVMFL), and 221 to 241 (GLFTSGIQALIFATLAAAYIG).

Belongs to the ATPase A chain family. In terms of assembly, F-type ATPases have 2 components, CF(1) - the catalytic core - and CF(0) - the membrane proton channel. CF(1) has five subunits: alpha(3), beta(3), gamma(1), delta(1), epsilon(1). CF(0) has four main subunits: a, b, b' and c.

The protein resides in the plastid. The protein localises to the chloroplast thylakoid membrane. Functionally, key component of the proton channel; it plays a direct role in the translocation of protons across the membrane. The polypeptide is ATP synthase subunit a, chloroplastic (Pinus koraiensis (Korean pine)).